Reading from the N-terminus, the 322-residue chain is MISRHLQNNLMSVDPVSSQAMELSDVTLIEGVGNEVTVVAGVVVLILALVLAWLSTYVADSGSNPLLGTIVSAGDTSVLHLGHVDHLVAGQGTPEPTELPHPSEGNDEKAEEAGEGGGDPTGEPGAGGGVEPSLEHLLDIQGLPKRQAGPGNSSLEAPVRSEDSTCLPSSPSLISVRLKFFNDTEELAVARPEDTVGALKSKYFPGQESQMKLIYQGRLLQDPARTLRSLNITDNCVIHCHRSPPGSAVAGPSSSLAPSSTTEPPNLGVSVGSLMVPVFVVLLGVVWYFRINYRQFFTAPATVSLVGVTVFFSFLVFGMYGR.

A helical membrane pass occupies residues 38–58 (VVAGVVVLILALVLAWLSTYV). A disordered region spans residues 88–168 (VAGQGTPEPT…VRSEDSTCLP (81 aa)). Positions 115-130 (EGGGDPTGEPGAGGGV) are enriched in gly residues. Positions 174-247 (ISVRLKFFND…IHCHRSPPGS (74 aa)) constitute a Ubiquitin-like domain. The next 2 membrane-spanning stretches (helical) occupy residues 267-287 (LGVS…GVVW) and 296-316 (FFTA…SFLV).

It localises to the membrane. This Bos taurus (Bovine) protein is Transmembrane and ubiquitin-like domain-containing protein 2 (TMUB2).